The following is a 377-amino-acid chain: RING finger protein 215 (377 aa).

The Cytoplasmic segment spans residues 1-22; it reads MGPAARPALRSPPPPPPPPPSP. The interval 1 to 22 is disordered; sequence MGPAARPALRSPPPPPPPPPSP. A compositionally biased stretch (pro residues) spans 10–22; that stretch reads RSPPPPPPPPPSP. The chain crosses the membrane as a helical span at residues 23–43; sequence LLLLLPLLPLWLGLAGPGAAA. The Extracellular segment spans residues 44–250; that stretch reads DGSEPAAGAG…GGSRAQEQKP (207 aa). Asn186 carries N-linked (GlcNAc...) asparagine glycosylation. A helical membrane pass occupies residues 251-271; sequence LQQLWNAILLVAMLLCTGLVV. Residues 272 to 377 are Cytoplasmic-facing; the sequence is QAQRQASRQS…NVLGNRYSDD (106 aa). The segment at 325-366 adopts an RING-type; atypical zinc-finger fold; that stretch reads CAVCLDYFCNKQWLRVLPCKHEFHRDCVDPWLMLQQTCPLCK.

Its subcellular location is the membrane. The chain is RING finger protein 215 (RNF215) from Homo sapiens (Human).